The sequence spans 122 residues: Large ribosomal subunit protein uL14 (122 aa).

This sequence belongs to the universal ribosomal protein uL14 family. Part of the 50S ribosomal subunit. Forms a cluster with proteins L3 and L19. In the 70S ribosome, L14 and L19 interact and together make contacts with the 16S rRNA in bridges B5 and B8.

Binds to 23S rRNA. Forms part of two intersubunit bridges in the 70S ribosome. This chain is Large ribosomal subunit protein uL14, found in Rickettsia felis (strain ATCC VR-1525 / URRWXCal2) (Rickettsia azadi).